We begin with the raw amino-acid sequence, 347 residues long: NADH-ubiquinone oxidoreductase chain 2 (347 aa).

10 helical membrane-spanning segments follow: residues 13-33 (IFAGTLITALSSHWFFTWVGL), 56-76 (AIKYFLTQATASMILLMAILF), 96-116 (LMIMMAMAMKLGMAPFHFWVP), 123-143 (PLTSGLLLLTWQKLAPISIMY), 149-169 (LNVSLLLTLSILSIMAGSWGG), 178-198 (ILAYSSITHMGWMMAVLPYNP), 201-221 (TILNLTIYIILTTTAFLLLNL), 247-267 (TLLSLGGLPPLTGFLPKWAII), 274-294 (NSLIIPTIMATITLLNLYFYL), and 326-346 (LPTLIALTTLLLPISPFMLMI).

Belongs to the complex I subunit 2 family. As to quaternary structure, core subunit of respiratory chain NADH dehydrogenase (Complex I) which is composed of 45 different subunits. Interacts with TMEM242.

The protein resides in the mitochondrion inner membrane. The catalysed reaction is a ubiquinone + NADH + 5 H(+)(in) = a ubiquinol + NAD(+) + 4 H(+)(out). In terms of biological role, core subunit of the mitochondrial membrane respiratory chain NADH dehydrogenase (Complex I) which catalyzes electron transfer from NADH through the respiratory chain, using ubiquinone as an electron acceptor. Essential for the catalytic activity and assembly of complex I. The polypeptide is NADH-ubiquinone oxidoreductase chain 2 (Homo sapiens (Human)).